A 404-amino-acid polypeptide reads, in one-letter code: tRNA-specific 2-thiouridylase MnmA (404 aa).

ATP is bound by residues 42 to 49 (GLSGGVDS) and Leu-68. The active-site Nucleophile is the Cys-129. Cysteines 129 and 239 form a disulfide. Position 154 (Gly-154) interacts with ATP. The interval 189 to 191 (KDQ) is interaction with tRNA. The active-site Cysteine persulfide intermediate is the Cys-239. The interval 344-345 (RY) is interaction with tRNA.

The protein belongs to the MnmA/TRMU family.

Its subcellular location is the cytoplasm. The enzyme catalyses S-sulfanyl-L-cysteinyl-[protein] + uridine(34) in tRNA + AH2 + ATP = 2-thiouridine(34) in tRNA + L-cysteinyl-[protein] + A + AMP + diphosphate + H(+). Its function is as follows. Catalyzes the 2-thiolation of uridine at the wobble position (U34) of tRNA, leading to the formation of s(2)U34. In Prochlorococcus marinus (strain NATL1A), this protein is tRNA-specific 2-thiouridylase MnmA.